The sequence spans 267 residues: tRNA pseudouridine synthase A (267 aa).

D55 functions as the Nucleophile in the catalytic mechanism. Residue Y111 coordinates substrate.

It belongs to the tRNA pseudouridine synthase TruA family.

It catalyses the reaction uridine(38/39/40) in tRNA = pseudouridine(38/39/40) in tRNA. Formation of pseudouridine at positions 38, 39 and 40 in the anticodon stem and loop of transfer RNAs. The sequence is that of tRNA pseudouridine synthase A from Thermococcus kodakarensis (strain ATCC BAA-918 / JCM 12380 / KOD1) (Pyrococcus kodakaraensis (strain KOD1)).